The chain runs to 62 residues: Large ribosomal subunit protein uL30 (62 aa).

Belongs to the universal ribosomal protein uL30 family. Part of the 50S ribosomal subunit.

This Shouchella clausii (strain KSM-K16) (Alkalihalobacillus clausii) protein is Large ribosomal subunit protein uL30.